Here is an 868-residue protein sequence, read N- to C-terminus: E3 ubiquitin-protein ligase TRIM71 (868 aa).

The residue at position 2 (Ala-2) is an N-acetylalanine. The segment at Cys-12–Asp-89 adopts an RING-type zinc-finger fold. A compositionally biased stretch (low complexity) spans Ser-26–Ser-41. Disordered stretches follow at residues Ser-26–Gly-50 and Ala-121–Ser-186. A compositionally biased stretch (basic residues) spans Ser-142–Pro-153. Over residues Ala-159–Ser-176 the composition is skewed to pro residues. A compositionally biased stretch (low complexity) spans Ala-177 to Ser-186. The segment at Arg-191 to Gly-238 adopts a B box-type 1; atypical zinc-finger fold. The B box-type 2 zinc-finger motif lies at Glu-273–Leu-314. Zn(2+) contacts are provided by Cys-278, His-281, Cys-301, and His-306. The stretch at Gln-391–Ala-427 forms a coiled coil. A Filamin repeat occupies Ser-479–Val-580. NHL repeat units follow at residues Gly-593 to Cys-636, His-640 to Glu-683, Leu-687 to Asp-730, Leu-734 to Asp-777, Ala-781 to Asn-824, and Leu-828 to Phe-868.

This sequence belongs to the TRIM/RBCC family. As to quaternary structure, interacts (via NHL repeats) with AGO2; the interaction increases in presence of RNA. Interacts with HSP90AA1. Interacts (via NHL repeats) with MOV10, PABPC1, PUM1, PUM2, STAU2, XRN1 and XRN2 in an RNA-dependent manner. Interacts with SHCBP1; leading to enhance its stability. Autoubiquitinated.

It localises to the cytoplasm. The protein resides in the P-body. It catalyses the reaction S-ubiquitinyl-[E2 ubiquitin-conjugating enzyme]-L-cysteine + [acceptor protein]-L-lysine = [E2 ubiquitin-conjugating enzyme]-L-cysteine + N(6)-ubiquitinyl-[acceptor protein]-L-lysine.. The protein operates within protein modification; protein ubiquitination. Its function is as follows. E3 ubiquitin-protein ligase that cooperates with the microRNAs (miRNAs) machinery and promotes embryonic stem cells proliferation and maintenance. Binds to miRNAs and associates with AGO2, participating in post-transcriptional repression of transcripts such as CDKN1A. In addition, participates in post-transcriptional mRNA repression in a miRNA independent mechanism. Facilitates the G1-S transition to promote rapid embryonic stem cell self-renewal by repressing CDKN1A expression. Required to maintain proliferation and prevent premature differentiation of neural progenitor cells during early neural development: positively regulates FGF signaling by controlling the stability of SHCBP1. Specific regulator of miRNA biogenesis. Binds to miRNA MIR29A hairpin and postranscriptionally modulates MIR29A levels, which indirectly regulates TET proteins expression. The sequence is that of E3 ubiquitin-protein ligase TRIM71 (TRIM71) from Bos taurus (Bovine).